The sequence spans 232 residues: MLGAMFRAGTPMTPNLNPEGGGHYFIDRDGKAFRHILNFLRLGRLDLPLGYGETALLRAEADFYQIRPLLDALRELEASRGTPAPTAALLHADVDSSPRLVHFSARRGPHHYELSSVQVDTFRANLFCTDPECLGALRARFGVTNEDRAEGGPHFRLEWAPRPAELPEVEYRRLGLQPLWTGAPGEPRDVVGTPSFLEEVLRVALEHGFRLDSVFPDPEDLLNSRSLRFVRH.

A BTB domain is found at 1 to 49 (MLGAMFRAGTPMTPNLNPEGGGHYFIDRDGKAFRHILNFLRLGRLDLPL).

Homopentamer. Interacts with KCTD6 and KCTD21; KCTD11 and KCTD6 or KCTD21 may associate in pentameric assemblies. Component of the BCR(KCTD11) E3 ubiquitin ligase complex, at least composed of CUL3 and KCTD11 and RBX1. Interacts (via BTB domain) with CUL3; initially a 4:4 stoichiometry has been reported, however, electron microscopy revealed pentameric states of the BTB domain.

It functions in the pathway protein modification; protein ubiquitination. Functionally, plays a role as a marker and a regulator of neuronal differentiation; Up-regulated by a variety of neurogenic signals, such as retinoic acid, epidermal growth factor/EGF and NGFB/nerve growth factor. Induces apoptosis, growth arrest and the expression of cyclin-dependent kinase inhibitor CDKN1B. Plays a role as a tumor repressor and inhibits cell growth and tumorigenicity of medulloblastoma (MDB). Acts as a probable substrate-specific adapter for a BCR (BTB-CUL3-RBX1) E3 ubiquitin-protein ligase complex towards HDAC1. Functions as antagonist of the Hedgehog pathway on cell proliferation and differentiation by affecting the nuclear transfer of transcription factor GLI1, thus maintaining cerebellar granule cells in undifferentiated state, this effect probably occurs via HDAC1 down-regulation, keeping GLI1 acetylated and inactive. In Bos taurus (Bovine), this protein is BTB/POZ domain-containing protein KCTD11 (KCTD11).